Consider the following 201-residue polypeptide: Recombination protein RecR (201 aa).

The segment at 60 to 75 (CKVCGNIDTQNPCTVC) adopts a C4-type zinc-finger fold. One can recognise a Toprim domain in the interval 83–178 (SIIVVVADVA…KVTRLAHGVP (96 aa)).

This sequence belongs to the RecR family.

Functionally, may play a role in DNA repair. It seems to be involved in an RecBC-independent recombinational process of DNA repair. It may act with RecF and RecO. The protein is Recombination protein RecR of Rhodopseudomonas palustris (strain BisB18).